The sequence spans 493 residues: 3-octaprenyl-4-hydroxybenzoate carboxy-lyase (493 aa).

Mn(2+) is bound at residue asparagine 172. Prenylated FMN is bound by residues 175–177 (IYR), 189–191 (RWL), and 194–195 (RG). Mn(2+) is bound at residue glutamate 238. Aspartate 287 (proton donor) is an active-site residue.

Belongs to the UbiD family. Homohexamer. Requires prenylated FMN as cofactor. The cofactor is Mn(2+).

It localises to the cell membrane. It catalyses the reaction a 4-hydroxy-3-(all-trans-polyprenyl)benzoate + H(+) = a 2-(all-trans-polyprenyl)phenol + CO2. The protein operates within cofactor biosynthesis; ubiquinone biosynthesis. Functionally, catalyzes the decarboxylation of 3-octaprenyl-4-hydroxy benzoate to 2-octaprenylphenol, an intermediate step in ubiquinone biosynthesis. This is 3-octaprenyl-4-hydroxybenzoate carboxy-lyase from Shewanella sediminis (strain HAW-EB3).